A 255-amino-acid polypeptide reads, in one-letter code: MKIGVFDSGVGGFSVLKSLLKARLFDEIIYYGDSARVPYGTKDPTTIKQFGLEALDFFKPHEIELLIVACNTASALALEEMQKYSKIPIVGVIEPSILAIKRQVEDKNAPILVLGTKATIQSNAYDNALKQQGYLNISHLATSLFVPLIEESILEGELLETCMHYYFTPLEILPEVIILGCTHFPLIAQKIEGYFMGHFALPTPPLLIHSGDAIVEYLQQKYALKNNACTFPKVEFHASGDVIWLERQAKEWLKL.

Substrate-binding positions include 7–8 (DS) and 39–40 (YG). The active-site Proton donor/acceptor is the Cys-70. 71-72 (NT) is a substrate binding site. Cys-181 (proton donor/acceptor) is an active-site residue. 182–183 (TH) is a substrate binding site.

The protein belongs to the aspartate/glutamate racemases family. As to quaternary structure, homodimer.

The catalysed reaction is L-glutamate = D-glutamate. Its pathway is cell wall biogenesis; peptidoglycan biosynthesis. Functionally, provides the (R)-glutamate required for cell wall biosynthesis. This Helicobacter pylori (strain J99 / ATCC 700824) (Campylobacter pylori J99) protein is Glutamate racemase.